The sequence spans 320 residues: Glucokinase (320 aa).

The protein belongs to the ROK (NagC/XylR) family. As to quaternary structure, monomer. A divalent metal cation is required as a cofactor.

It carries out the reaction D-glucose + ATP = D-glucose 6-phosphate + ADP + H(+). Functionally, catalyzes the phosphorylation of D-glucose to D-glucose 6-phosphate using ATP as the phosphate donor. ITP can also serve as an effective phosphoryl donor. According to Hansen et al., the enzyme has a broad hexose specificity, and in addition to glucose, which shows the highest catalytic efficiency, it can also phosphorylate fructose, mannose, glucosamine, N-acetylglucosamine, N-acetylmannosamine and 2-deoxyglucose. However, according to Sakuraba et al., the enzyme shows strict specificity for D-glucose. In Aeropyrum pernix (strain ATCC 700893 / DSM 11879 / JCM 9820 / NBRC 100138 / K1), this protein is Glucokinase.